The following is a 122-amino-acid chain: Small ribosomal subunit protein uS13 (122 aa).

The tract at residues 96–122 (LPCRGQRTHTNARTRKGPRKPIAGKKK) is disordered.

This sequence belongs to the universal ribosomal protein uS13 family. Part of the 30S ribosomal subunit. Forms a loose heterodimer with protein S19. Forms two bridges to the 50S subunit in the 70S ribosome.

Functionally, located at the top of the head of the 30S subunit, it contacts several helices of the 16S rRNA. In the 70S ribosome it contacts the 23S rRNA (bridge B1a) and protein L5 of the 50S subunit (bridge B1b), connecting the 2 subunits; these bridges are implicated in subunit movement. Contacts the tRNAs in the A and P-sites. The sequence is that of Small ribosomal subunit protein uS13 from Magnetococcus marinus (strain ATCC BAA-1437 / JCM 17883 / MC-1).